Here is a 335-residue protein sequence, read N- to C-terminus: MAYVTSTQLYNWRFTQDELANQRQECNAAVRRRLSAQYRAKAEVKGGDVPAEPTFLTAEEEFIIVKRYIFAMKELFHQFSDSGLPVDVFGFAATYLKRFYLNNSVMDYFPREMMLTALYLACKAADYPLGLQTFAAHIPRNREHYSEIVVHSELFLMEKLQYDIWIHTPYRPLSGLLVDLLAYRKTQLGEPMTIEAGEVATADMMTSLKKEGYEIIHKWFQTDLCLTHSPSQFALAVLLELGQKHPDLGVEKFVKNSVCEYNSSDELMEQKWTALNEKMEQIQTMIGEFEFLSDLTYGSDLEAVLMQCRNPLYDPLSEEYAAAKEQAEKLMSFLD.

This sequence belongs to the cyclin family. Cyclin C subfamily.

Its subcellular location is the nucleus. In terms of biological role, regulates CDK7, the catalytic subunit of the CDK-activating kinase (CAK) enzymatic complex. This Echinococcus multilocularis (Fox tapeworm) protein is Probable cyclin-H (CYCH).